The chain runs to 366 residues: Phospho-N-acetylmuramoyl-pentapeptide-transferase (366 aa).

The next 10 helical transmembrane spans lie at 27-47 (AAMF…IASL), 71-91 (TPTM…LLWA), 93-113 (LSNV…AIGF), 134-154 (LAIE…AAKI), 174-194 (ALLN…VSAG), 205-225 (GLAI…AYLA), 245-265 (LAVI…FNAP), 268-288 (AIFM…TVAV), 294-314 (IVMV…IIQV), and 343-363 (QVVI…LATL).

This sequence belongs to the glycosyltransferase 4 family. MraY subfamily. Mg(2+) is required as a cofactor.

It localises to the cell inner membrane. The enzyme catalyses UDP-N-acetyl-alpha-D-muramoyl-L-alanyl-gamma-D-glutamyl-meso-2,6-diaminopimeloyl-D-alanyl-D-alanine + di-trans,octa-cis-undecaprenyl phosphate = di-trans,octa-cis-undecaprenyl diphospho-N-acetyl-alpha-D-muramoyl-L-alanyl-D-glutamyl-meso-2,6-diaminopimeloyl-D-alanyl-D-alanine + UMP. Its pathway is cell wall biogenesis; peptidoglycan biosynthesis. Its function is as follows. Catalyzes the initial step of the lipid cycle reactions in the biosynthesis of the cell wall peptidoglycan: transfers peptidoglycan precursor phospho-MurNAc-pentapeptide from UDP-MurNAc-pentapeptide onto the lipid carrier undecaprenyl phosphate, yielding undecaprenyl-pyrophosphoryl-MurNAc-pentapeptide, known as lipid I. The sequence is that of Phospho-N-acetylmuramoyl-pentapeptide-transferase from Allorhizobium ampelinum (strain ATCC BAA-846 / DSM 112012 / S4) (Agrobacterium vitis (strain S4)).